The primary structure comprises 115 residues: MNLMLALLTNFTLATLLVIIAFWLPQLNVYSEKTSPYECGFDPMGSARLPFSMKFFLVAITFLLFDLEIALLLPLPWASQTANLNTMLTMALFLIILLAVSLAYEWTQKGLEWTE.

Methionine 1 is modified (N-formylmethionine). Helical transmembrane passes span 3–23 (LMLA…IAFW), 55–75 (FFLV…LLPL), and 84–104 (LNTM…SLAY).

In terms of assembly, core subunit of respiratory chain NADH dehydrogenase (Complex I) which is composed of 45 different subunits. Interacts with TMEM186. Interacts with TMEM242.

It is found in the mitochondrion inner membrane. The enzyme catalyses a ubiquinone + NADH + 5 H(+)(in) = a ubiquinol + NAD(+) + 4 H(+)(out). In terms of biological role, core subunit of the mitochondrial membrane respiratory chain NADH dehydrogenase (Complex I) which catalyzes electron transfer from NADH through the respiratory chain, using ubiquinone as an electron acceptor. Essential for the catalytic activity of complex I. The protein is NADH-ubiquinone oxidoreductase chain 3 of Bos taurus (Bovine).